The chain runs to 557 residues: Glypican-1 (557 aa).

An N-terminal signal peptide occupies residues 1–23 (MELRTRGWWLLCAAAALVVCARG). 7 disulfides stabilise this stretch: Cys32/Cys68, Cys62/Cys255, Cys69/Cys258, Cys190/Cys342, Cys245/Cys278, Cys267/Cys414, and Cys271/Cys400. Residues Asn79 and Asn116 are each glycosylated (N-linked (GlcNAc...) asparagine). The interval 477-531 (FQDASDDGSGSGSGGGCPDDTCGRRVSKKSSSSRTPLTHALPGLSEQEGQKTSAA) is disordered. O-linked (Xyl...) (heparan sulfate) serine glycans are attached at residues Ser485, Ser487, and Ser489. The GPI-anchor amidated serine moiety is linked to residue Ser529. Residues 530 to 557 (AATCPEPHSFFLLFLVTLVLAAARPRWR) constitute a propeptide, removed in mature form.

This sequence belongs to the glypican family. In terms of processing, S-nitrosylated in a Cu(2+)-dependent manner. Nitric acid (NO) is released from the nitrosylated cysteines by ascorbate or by some other reducing agent, in a Cu(2+) or Zn(2+) dependent manner. This free nitric oxide is then capable of cleaving the heparan sulfate side chains. Post-translationally, N- and O-glycosylated. N-glycosylation is mainly of the complex type containing sialic acid. O-glycosylated with heparan sulfate. The heparan sulfate chains can be cleaved either by the action of heparanase or, degraded by a deaminative process that uses nitric oxide (NO) released from the S-nitrosylated cysteines. This process is triggered by ascorbate, or by some other reducing agent, in a Cu(2+)- or Zn(2+) dependent manner. Cu(2+) ions are provided by ceruloproteins such as APP, PRNP or CP which associate with GCP1 in intracellular compartments or lipid rafts. This cell-associated glypican is further processed to give rise to a medium-released species.

It is found in the cell membrane. It localises to the endosome. The protein localises to the secreted. The protein resides in the extracellular space. In terms of biological role, cell surface proteoglycan that bears heparan sulfate. Binds, via the heparan sulfate side chains, alpha-4 (V) collagen and participates in Schwann cell myelination. May act as a catalyst in increasing the rate of conversion of prion protein PRPN(C) to PRNP(Sc) via associating (via the heparan sulfate side chains) with both forms of PRPN, targeting them to lipid rafts and facilitating their interaction. Required for proper skeletal muscle differentiation by sequestering FGF2 in lipid rafts preventing its binding to receptors (FGFRs) and inhibiting the FGF-mediated signaling. Binds Cu(2+) or Zn(2+) ions. The sequence is that of Glypican-1 (Gpc1) from Mus musculus (Mouse).